The primary structure comprises 166 residues: MATSELSCLVSEENCERREAFWAEWKDLTLSTRPEEGCSLHEEDTQRHETYHRQGQCQALVQRSPWLVMRMGILGRGLQEYQLPYQRVLPLPIFTPAKVGTKEEREETPIQLQELLALETALGGQCVDRQDVAEITKQLPPVVPVSKPGTLRRSLSRSMSQEAQRG.

Position 39 is a phosphoserine (Ser-39). The segment at Val-145–Gly-166 is disordered. Over residues Ser-156–Gly-166 the composition is skewed to polar residues.

As to quaternary structure, interacts with MYOZ1, MYOZ2 and MYOZ3. Interacts with CSRP3. Interacts directly with the N-terminal Ig-like domains of 2 titin (TTN) molecules. Interacts with ANKRD2; the interaction is direct.

The protein localises to the cytoplasm. The protein resides in the myofibril. Its subcellular location is the sarcomere. Its function is as follows. Muscle assembly regulating factor. Mediates the antiparallel assembly of titin (TTN) molecules at the sarcomeric Z-disk. This is Telethonin (TCAP) from Bos taurus (Bovine).